The sequence spans 345 residues: S-adenosylmethionine:tRNA ribosyltransferase-isomerase (345 aa).

The protein belongs to the QueA family. Monomer.

Its subcellular location is the cytoplasm. The enzyme catalyses 7-aminomethyl-7-carbaguanosine(34) in tRNA + S-adenosyl-L-methionine = epoxyqueuosine(34) in tRNA + adenine + L-methionine + 2 H(+). The protein operates within tRNA modification; tRNA-queuosine biosynthesis. Functionally, transfers and isomerizes the ribose moiety from AdoMet to the 7-aminomethyl group of 7-deazaguanine (preQ1-tRNA) to give epoxyqueuosine (oQ-tRNA). In Shewanella putrefaciens (strain CN-32 / ATCC BAA-453), this protein is S-adenosylmethionine:tRNA ribosyltransferase-isomerase.